A 709-amino-acid polypeptide reads, in one-letter code: Ribosomal RNA large subunit methyltransferase K/L (709 aa).

The THUMP domain maps to leucine 43–phenylalanine 154.

This sequence belongs to the methyltransferase superfamily. RlmKL family.

It localises to the cytoplasm. It catalyses the reaction guanosine(2445) in 23S rRNA + S-adenosyl-L-methionine = N(2)-methylguanosine(2445) in 23S rRNA + S-adenosyl-L-homocysteine + H(+). It carries out the reaction guanosine(2069) in 23S rRNA + S-adenosyl-L-methionine = N(2)-methylguanosine(2069) in 23S rRNA + S-adenosyl-L-homocysteine + H(+). Its function is as follows. Specifically methylates the guanine in position 2445 (m2G2445) and the guanine in position 2069 (m7G2069) of 23S rRNA. In Shewanella baltica (strain OS185), this protein is Ribosomal RNA large subunit methyltransferase K/L.